A 148-amino-acid chain; its full sequence is Large ribosomal subunit protein uL15 (148 aa).

Residues 1–30 (MPSRLRKTRKLRGHVSHGHGRIGKHRKHPG) show a composition bias toward basic residues. Positions 1–39 (MPSRLRKTRKLRGHVSHGHGRIGKHRKHPGGRGNAGGLH) are disordered. A (3S)-3-hydroxyhistidine modification is found at His39. An N6-acetyllysine mark is found at Lys47 and Lys55. Ser68 is modified (phosphoserine). Lys110 carries the post-translational modification N6-acetyllysine.

This sequence belongs to the universal ribosomal protein uL15 family. Component of the large ribosomal subunit. Post-translationally, hydroxylated on His-39 by MINA.

The protein resides in the cytoplasm. Component of the large ribosomal subunit. The ribosome is a large ribonucleoprotein complex responsible for the synthesis of proteins in the cell. This Macaca fascicularis (Crab-eating macaque) protein is Large ribosomal subunit protein uL15 (RPL27A).